Here is a 101-residue protein sequence, read N- to C-terminus: Small ribosomal subunit protein uS14 (101 aa).

Over residues Met-1 to Asn-10 the composition is skewed to basic and acidic residues. Residues Met-1–Lys-23 form a disordered region. A compositionally biased stretch (basic residues) spans Asn-11–Lys-23.

This sequence belongs to the universal ribosomal protein uS14 family. As to quaternary structure, part of the 30S ribosomal subunit. Contacts proteins S3 and S10.

Its function is as follows. Binds 16S rRNA, required for the assembly of 30S particles and may also be responsible for determining the conformation of the 16S rRNA at the A site. The sequence is that of Small ribosomal subunit protein uS14 from Bradyrhizobium sp. (strain BTAi1 / ATCC BAA-1182).